Reading from the N-terminus, the 366-residue chain is S-adenosylmethionine decarboxylase proenzyme 1 (366 aa).

Residues Glu-9 and Glu-12 contribute to the active site. Glu-68 provides a ligand contact to substrate. The active-site Schiff-base intermediate with substrate; via pyruvic acid is the Ser-69. Ser-69 bears the Pyruvic acid (Ser); by autocatalysis mark. Cys-83 acts as the Proton donor; for catalytic activity in catalysis. Active-site proton acceptor; for processing activity residues include Ser-233 and His-246. Substrate is bound at residue Glu-250.

It belongs to the eukaryotic AdoMetDC family. Requires pyruvate as cofactor. Post-translationally, is synthesized initially as an inactive proenzyme. Formation of the active enzyme involves a self-maturation process in which the active site pyruvoyl group is generated from an internal serine residue via an autocatalytic post-translational modification. Two non-identical subunits are generated from the proenzyme in this reaction, and the pyruvate is formed at the N-terminus of the alpha chain, which is derived from the carboxyl end of the proenzyme. The post-translation cleavage follows an unusual pathway, termed non-hydrolytic serinolysis, in which the side chain hydroxyl group of the serine supplies its oxygen atom to form the C-terminus of the beta chain, while the remainder of the serine residue undergoes an oxidative deamination to produce ammonia and the pyruvoyl group blocking the N-terminus of the alpha chain.

It carries out the reaction S-adenosyl-L-methionine + H(+) = S-adenosyl 3-(methylsulfanyl)propylamine + CO2. It functions in the pathway amine and polyamine biosynthesis; S-adenosylmethioninamine biosynthesis; S-adenosylmethioninamine from S-adenosyl-L-methionine: step 1/1. Functionally, essential for biosynthesis of the polyamines spermidine and spermine. Essential for polyamine homeostasis, and normal plant embryogenesis, growth and development. The polypeptide is S-adenosylmethionine decarboxylase proenzyme 1 (Arabidopsis thaliana (Mouse-ear cress)).